The sequence spans 514 residues: Periplasmic [NiFeSe] hydrogenase large subunit (514 aa).

Glutamate 52 contributes to the Fe cation binding site. Ni(2+)-binding residues include cysteine 71 and cysteine 74. The Fe cation site is built by cysteine 74 and isoleucine 445. 2 residues coordinate Ni(2+): selenocysteine 493 and cysteine 496. Residue selenocysteine 493 is a non-standard amino acid, selenocysteine. Fe cation is bound by residues cysteine 496 and histidine 499.

The protein belongs to the [NiFe]/[NiFeSe] hydrogenase large subunit family. In terms of assembly, heterodimer of a large and a small subunit. Fe cation serves as cofactor. The cofactor is Ni(2+).

It localises to the periplasm. It carries out the reaction H2 + A = AH2. This Desulfomicrobium baculatum (Desulfovibrio baculatus) protein is Periplasmic [NiFeSe] hydrogenase large subunit.